A 240-amino-acid polypeptide reads, in one-letter code: Proteasome subunit alpha (240 aa).

This sequence belongs to the peptidase T1A family. As to quaternary structure, the 20S proteasome core is composed of 14 alpha and 14 beta subunits that assemble into four stacked heptameric rings, resulting in a barrel-shaped structure. The two inner rings, each composed of seven catalytic beta subunits, are sandwiched by two outer rings, each composed of seven alpha subunits. The catalytic chamber with the active sites is on the inside of the barrel. Has a gated structure, the ends of the cylinder being occluded by the N-termini of the alpha-subunits. Is capped at one or both ends by the proteasome regulatory ATPase, PAN.

The protein resides in the cytoplasm. Its activity is regulated as follows. The formation of the proteasomal ATPase PAN-20S proteasome complex, via the docking of the C-termini of PAN into the intersubunit pockets in the alpha-rings, triggers opening of the gate for substrate entry. Interconversion between the open-gate and close-gate conformations leads to a dynamic regulation of the 20S proteasome proteolysis activity. Its function is as follows. Component of the proteasome core, a large protease complex with broad specificity involved in protein degradation. The polypeptide is Proteasome subunit alpha (Metallosphaera sedula (strain ATCC 51363 / DSM 5348 / JCM 9185 / NBRC 15509 / TH2)).